A 117-amino-acid polypeptide reads, in one-letter code: uncharacterized protein (117 aa).

This is an uncharacterized protein from Saccharomyces cerevisiae (strain ATCC 204508 / S288c) (Baker's yeast).